We begin with the raw amino-acid sequence, 221 residues long: Factor arrest protein 7 (221 aa).

As to quaternary structure, component of a complex at least composed of FAR3, FAR7, FAR8, FAR10, FAR11 and VPS64.

Its function is as follows. Participates in the control of the reentry into the cell cycle following pheromone treatment. This chain is Factor arrest protein 7 (FAR7), found in Saccharomyces cerevisiae (strain ATCC 204508 / S288c) (Baker's yeast).